The chain runs to 515 residues: MGASISSNVTKLVTDAIVRTSNEVVQTAHATNNQSIVFDVKNTSGDVVISGNTIRQTATINMVGLSQALNNSDNNIKLDQQIAQMAKAVISGLNLAQLADANNTVDSLIKTCIEIKNVTTQQCMMNTSQKINVLVEGTKGNVSIVNNEISQLATSIQSCVEKAASNNKNLQDITSSIQQAATSEAKGLSLAMIALIIVAMGLTGVGGVYAGGKIIFPAVLIGSIVSFVLYFQWTVREISSYSFVQNTLSESADCSIQKSSGESDNIGSAKSASEKCQNDNTCVAYEWQNGQAVYYKNMTIGNSCKSYYSNGAHKDTLPVIKKLIFQKGARNPVNTDVANAWLNTLDGSFWVNSDPNVLKYFGGRYGRLPYQTRYLYASGGTYVGDDVNGVGWNQQGSFGKRANRTIDWGDGPPSTITSQAEGDIWVDYHDPSLLKVYTYIAQQGGGFIWQSGQIIKGIGPIVNSNVENSKSVGFAIESKKQWLLYLAIGLLIVGVIGMAFSSGMFSKKNNGKSKQ.

The N-myristoyl glycine; by host moiety is linked to residue glycine 2. Helical transmembrane passes span 188-208 (LSLA…VGGV), 214-234 (IIFP…FQWT), and 482-502 (WLLY…AFSS).

The protein belongs to the IIV-6 118L/458R family.

It is found in the membrane. The sequence is that of Putative myristoylated protein 118L from Acheta domesticus (House cricket).